A 242-amino-acid polypeptide reads, in one-letter code: Lactate utilization protein A 2 (242 aa).

Belongs to the LutA/YkgE family.

Is involved in L-lactate degradation and allows cells to grow with lactate as the sole carbon source. This is Lactate utilization protein A 2 from Bacillus cereus (strain AH820).